The chain runs to 65 residues: Large ribosomal subunit protein bL32 (65 aa).

Belongs to the bacterial ribosomal protein bL32 family.

The protein is Large ribosomal subunit protein bL32 of Phytoplasma australiense.